A 540-amino-acid chain; its full sequence is Mitochondrial antiviral-signaling protein (540 aa).

Position 2 is an N-acetylproline (Pro2). At 2 to 513 (PFAEDKTYKY…REVPCHRPSP (512 aa)) the chain is on the cytoplasmic side. Residues Lys7 and Lys10 each participate in a glycyl lysine isopeptide (Lys-Gly) (interchain with G-Cter in ubiquitin) cross-link. Residues 10–77 (KYICRNFSNF…WVEYFIAALR (68 aa)) enclose the CARD domain. Positions 10-77 (KYICRNFSNF…WVEYFIAALR (68 aa)) are required for interaction with NLRX1. A lipid anchor (S-palmitoyl cysteine) is attached at Cys79. Residues 95 to 297 (YQPRTSDRPP…EAPANSLPSK (203 aa)) are disordered. Over residues 106-122 (PLEPPSLPAERPGPPTP) the composition is skewed to pro residues. The segment at 143–147 (PVQET) is interaction with TRAF2. 2 stretches are compositionally biased toward polar residues: residues 145–165 (QETQAPESPGENSEQALQTLS) and 179–216 (ESSSDLAALSPLTSSGHQEQDTELGSTHTAGATSSLTP). Residues Ser152, Ser157, Ser165, Ser180, and Ser188 each carry the phosphoserine modification. The segment at 153–158 (PGENSE) is interaction with TRAF6. At Thr215 the chain carries Phosphothreonine. Phosphoserine occurs at positions 222 and 233. Thr234 carries the phosphothreonine modification. Position 236 is an asymmetric dimethylarginine (Arg236). Low complexity predominate over residues 241–266 (PGPTGSVVSTGTSFSSSSPGLASAGA). Phosphoserine is present on residues Ser253 and Ser258. Glycyl lysine isopeptide (Lys-Gly) (interchain with G-Cter in ubiquitin) cross-links involve residues Lys311 and Lys325. Disordered regions lie at residues 314–358 (ANPA…RAGM) and 373–419 (SAST…SELS). Polar residues-rich tracts occupy residues 317–331 (ASVSTVPSKLPTSSK), 339–355 (NALTNPAPSKLPINSTR), and 373–382 (SASTVPTDGS). Residues 388–403 (TPAAPTPAGATGGSSA) show a composition bias toward low complexity. Phosphoserine is present on Ser408. Residues 439 to 442 (LAIS) carry the pLxIS motif motif. Ser442 carries the phosphoserine; by TBK1 modification. The interval 455-460 (PEENEY) is interaction with TRAF6. Residues Lys461 and Lys500 each participate in a glycyl lysine isopeptide (Lys-Gly) (interchain with G-Cter in ubiquitin) cross-link. Lys461 is covalently cross-linked ((Microbial infection) Glycyl lysine isopeptide (Lys-Gly) (interchain with G-Cter in UFM1)). The interval 476–507 (IQLLEGNPGPPADPDGGPRPQADRKFQEREVP) is disordered. A compositionally biased stretch (basic and acidic residues) spans 496–507 (QADRKFQEREVP). The helical transmembrane segment at 514–534 (GALWLQVAVTGVLVVTLLVVL) threads the bilayer. Over 535 to 540 (YRRRLH) the chain is Mitochondrial intermembrane.

As to quaternary structure, self-associates and polymerizes (via CARD domains) to form 400 nM long three-stranded helical filaments on mitochondria, filament nucleation requires interaction with RIGI whose CARD domains act as a template for filament assembly. Interacts with RIGI, IFIH1/MDA5, TRAF2, TRAF6 and C1QBP. May interact with FADD, RIPK1, CHUK and IKBKB. Interacts (when phosphorylated) with IRF3; following activation and phosphorylation on the pLxIS motif by TBK1, recruits IRF3. Interacts with NLRX1. Interaction with NLRX1 requires the CARD domain. Interacts with PSMA7. Interacts with TRAFD1. Interacts (via C-terminus) with PCBP2 in a complex containing MAVS/IPS1, PCBP2 and ITCH. Interacts with CYLD. Interacts with SRC. Interacts with DHX58/LGP2 and IKBKE. Interacts with STING1. Interacts with IFIT3 (via N-terminus). Interacts with TBK1 only in the presence of IFIT3. Interacts with TTLL12; the interaction prevents MAVS binding to TBK1 and IKBKE. Interacts with MUL1. Interacts with ANKRD17. Interacts with NDFIP1. Interacts with SMURF1; the interaction is mediated by NDFIP1 and leads to MAVS ubiquitination and degradation. Interacts with UBXN1; this interaction inhibits MAVS-mediated antiviral pathway. Interacts (via C-terminus) with GPATCH3; the interaction is markedly increased upon viral infection. Directly interacts (via CARD domain) with ATG5 and ATG12, either as ATG5 and ATG12 monomers or as ATG12-ATG5 conjugates. Interacts with DHX33 (via the helicase C-terminal domain). Interacts with DDX3X (via C-terminus); this interaction occurs rapidly, but transiently after Sendai virus infection. The interaction with DDX3X potentiates MAVS-mediated IFNB induction. Conversely inhibition of this interaction, for instance by HCV core protein, prevents MAVS-mediated IFNB induction. Transiently interacts with TRAF3 early during Sendai virus infection. Interacts with CLPB; the interaction is enhanced by Sendai virus infection. Interacts with TRAF3IP3. Interacts with TOMM70; the interaction is enhanced by Sendai virus infection. Interacts with ZNFX1. Interacts with N4BP3; this interaction promotes the polyubiquitination of MAVS. Interacts with TAX1BP1; this interaction induces MAVS polyubiquitination. Interacts with NLRP3; promoting NLRP3 recruitment to mitochondria and activation of the NLRP3 inflammasome. Interacts with ECSIT; this interaction bridges RIGI to the MAVS complex at the mitochondrion. Interacts with UBL7; this interaction promotes MAVS 'Lys-27'-linked ubiquitination leading to type I interferon production. Interacts (via transmembrane domain) with SMIM30/MAVI1 (via transmembrane domain); the interaction disrupts MAVS interaction with RIGI and inhibits MAVS aggregation, resulting in the repression of type I interferon signaling and innate immune responses. (Microbial infection) Interacts with hepatitis C virus (HCV) NS3/4A protease; this interaction leads to MAVS cleavage, thereby preventing the establishment of an antiviral state. In terms of assembly, (Microbial infection) Interacts with hepatitis GB virus B NS3/4A protease; this interaction leads to MAVS cleavage. As to quaternary structure, (Microbial infection) Interacts with human respiratory syncytial virus/HRSV protein NS1; this interaction disrupts MAVS binding to RIGI. (Microbial infection) Interacts with Andes virus Nnon-structural protein NS-S; this interaction may reduce MAVS ubiquitination and leads to inhibition of MAVS-induced type-I IFN signaling pathway. In terms of assembly, (Microbial infection) Interacts with Seneca Valley virus protease 3C; this interaction allows the cleavage of MAVS and subsequent suppression of host innate immunity. As to quaternary structure, (Microbial infection) Interacts with SARS-CoV virus protein ORF9b; this interaction mediates MAVS proteasomal degradation. (Microbial infection) Interacts with SARS-CoV-2 virus protein M; this interaction impairs MAVS self-association and its recruitment of downstream components. In terms of assembly, (Microbial infection) Interacts with foot-and-mouth disease virus protein VP1; this interaction competes with TRAF3 interaction to MAVS leading to suppression of host innate immunity. As to quaternary structure, (Microbial infection) Interacts with Epstein-Barr virus protein BILF1; this interaction mediates MAVS routing from mitochondria to lysosomes. In terms of processing, following activation, phosphorylated by TBK1 at Ser-442 in the pLxIS motif. The phosphorylated pLxIS motif constitutes an IRF3-binding motif, leading to recruitment of the transcription factor IRF3 to induce type-I interferons and other cytokines. Ubiquitinated. Undergoes 'Lys-48'-linked polyubiquitination catalyzed by ITCH; ITCH-dependent polyubiquitination is mediated by the interaction with PCBP2 and leads to MAVS/IPS1 proteasomal degradation. Ubiquitinated by RNF125, leading to its degradation by the proteasome. Undergoes 'Lys-48'-linked ubiquitination catalyzed by SMURF1. Undergoes 'Lys-48'-linked ubiquitination catalyzed by MARCHF5 at Lys-7 and Lys-500, leading to proteasomal degradation. Ubiquitinated via 'Lys-63'-linked ubiquitination at Lys-10, Lys-311 and Lys-461 by UBE2N and TRIM31, promoting MAVS polymerization and formation of three-stranded helical filaments on mitochondria. Undergoes 'Lys-63'-linked ubiquitination leading to enhanced interaction between MAVS and TRAF2. Undergoes 'Lys-27'-linked ubiquitination by TRIM21 leading to enhanced interaction between MAVS and TBK1. Deubiquitinated by USP10 leading to attenuation of RIGI-mediated MAVS aggregation and production of type I interferon. Undergoes 'Lys-48'-linked polyubiquitination catalyzed by RNF115 leading to its degradation. Post-translationally, palmitoylated by ZHDDC4. Palmitoylation promotes MAVS stabilization and activation by inhibiting 'Lys-48'- but facilitating 'Lys-63'-linked ubiquitination. In terms of processing, proteolytically cleaved by apoptotic caspases during apoptosis, leading to its inactivation. Cleavage by CASP3 during virus-induced apoptosis inactivates it, preventing cytokine overproduction. (Microbial infection) Cleaved and degraded by hepatitis A virus (HAV) protein 3ABC allowing the virus to disrupt the activation of host IRF3 through the MDA5 pathway. Post-translationally, (Microbial infection) Cleaved by the protease 2A of coxsackievirus B3, poliovirus and enterovirus 71 allowing the virus to disrupt the host type I interferon production. In terms of processing, (Microbial infection) Cleaved by Seneca Valley virus protease 3C allowing the virus to suppress interferon type-I production. (Microbial infection) Cleaved by HCV protease NS3/4A, thereby preventing the establishment of an antiviral state. Post-translationally, (Microbial infection) UFMylated by ULF1 in association with Epstein-Barr virus BILF1; leading to MAVS routing to the lysosome. As to expression, present in T-cells, monocytes, epithelial cells and hepatocytes (at protein level). Ubiquitously expressed, with highest levels in heart, skeletal muscle, liver, placenta and peripheral blood leukocytes.

It is found in the mitochondrion outer membrane. Its subcellular location is the mitochondrion. It localises to the peroxisome. Functionally, adapter required for innate immune defense against viruses. Acts downstream of DHX33, RIGI and IFIH1/MDA5, which detect intracellular dsRNA produced during viral replication, to coordinate pathways leading to the activation of NF-kappa-B, IRF3 and IRF7, and to the subsequent induction of antiviral cytokines such as IFNB and RANTES (CCL5). Peroxisomal and mitochondrial MAVS act sequentially to create an antiviral cellular state. Upon viral infection, peroxisomal MAVS induces the rapid interferon-independent expression of defense factors that provide short-term protection, whereas mitochondrial MAVS activates an interferon-dependent signaling pathway with delayed kinetics, which amplifies and stabilizes the antiviral response. May activate the same pathways following detection of extracellular dsRNA by TLR3. May protect cells from apoptosis. Involved in NLRP3 inflammasome activation by mediating NLRP3 recruitment to mitochondria. In Homo sapiens (Human), this protein is Mitochondrial antiviral-signaling protein.